The sequence spans 465 residues: Mothers against decapentaplegic homolog 5 (465 aa).

At threonine 2 the chain carries N-acetylthreonine. Residues 13-137 form the MH1 domain; it reads PAVKRLLGWK…YKRVESPVLP (125 aa). Cysteine 65, cysteine 110, cysteine 122, and histidine 127 together coordinate Zn(2+). The segment at 163-249 is disordered; it reads NEPHMPQNAT…PMDTSNNMIP (87 aa). The span at 169–182 shows a compositional bias: polar residues; sequence QNATFPDSFHQPNN. A compositionally biased stretch (pro residues) spans 186-197; that stretch reads PLSPNSPYPPSP. Positions 198–214 are enriched in low complexity; it reads ASSTYPNSPASSGPGSP. A compositionally biased stretch (polar residues) spans 234–249; that stretch reads GQDNSQPMDTSNNMIP. The 195-residue stretch at 271–465 folds into the MH2 domain; sequence WCSIVYYELN…SPLNPISSVS (195 aa). A phosphoserine mark is found at serine 463 and serine 465.

This sequence belongs to the dwarfin/SMAD family. Homodimer. Forms trimers with the co-SMAD SMAD4. Interacts with PEBP2-alpha subunit and SMURF1. Interacts with SUV39H1 and SUV39H2. Interacts (via MH2 domain) with LEMD3. Interacts with WWP1. Interacts with TMEM119. Interacts with ZNF8. Interacts with RANBP3L. Interacts with HK1. Interacts with HGS; this interaction attenuates BMP signaling. Phosphorylated on serine by BMP (bone morphogenetic proteins) type 1 receptor kinase. In terms of processing, ubiquitin-mediated proteolysis by SMAD-specific E3 ubiquitin ligase SMURF1. As to expression, ubiquitous.

It localises to the cytoplasm. The protein localises to the nucleus. Its subcellular location is the mitochondrion. In terms of biological role, transcriptional regulator that plays a role in various cellular processes including embryonic development, cell differentiation, angiogenesis and tissue homeostasis. Upon BMP ligand binding to their receptors at the cell surface, is phosphorylated by activated type I BMP receptors (BMPRIs) and associates with SMAD4 to form a heteromeric complex which translocates into the nucleus acting as transcription factor. In turn, the hetero-trimeric complex recognizes cis-regulatory elements containing Smad Binding Elements (SBEs) to modulate the outcome of the signaling network. Non-phosphorylated SMAD5 has a cytoplasmic role in energy metabolism regulation by promoting mitochondrial respiration and glycolysis in response to cytoplasmic pH changes. Mechanistically, interacts with hexokinase 1/HK1 and thereby accelerates glycolysis. This Homo sapiens (Human) protein is Mothers against decapentaplegic homolog 5 (SMAD5).